The sequence spans 254 residues: Dihydroorotate dehydrogenase B (NAD(+)), electron transfer subunit (254 aa).

One can recognise an FAD-binding FR-type domain in the interval 1 to 99 (MLQTEMKVIQ…LGPLGKGFDI (99 aa)). FAD is bound by residues 50–53 (RPIS), 67–69 (LYR), and 74–75 (GT). Residues Cys-218, Cys-223, Cys-226, and Cys-241 each coordinate [2Fe-2S] cluster.

Belongs to the PyrK family. In terms of assembly, heterotetramer of 2 PyrK and 2 PyrD type B subunits. [2Fe-2S] cluster is required as a cofactor. The cofactor is FAD.

The protein operates within pyrimidine metabolism; UMP biosynthesis via de novo pathway; orotate from (S)-dihydroorotate (NAD(+) route): step 1/1. Functionally, responsible for channeling the electrons from the oxidation of dihydroorotate from the FMN redox center in the PyrD type B subunit to the ultimate electron acceptor NAD(+). The polypeptide is Dihydroorotate dehydrogenase B (NAD(+)), electron transfer subunit (Listeria monocytogenes serovar 1/2a (strain ATCC BAA-679 / EGD-e)).